Consider the following 546-residue polypeptide: Phosphoglucomutase (546 aa).

Ser135 functions as the Phosphoserine intermediate in the catalytic mechanism. The Mg(2+) site is built by Ser135, Asp288, Asp290, and Asp292.

Belongs to the phosphohexose mutase family. It depends on Mg(2+) as a cofactor.

It catalyses the reaction alpha-D-glucose 1-phosphate = alpha-D-glucose 6-phosphate. Its pathway is glycolipid metabolism; diglucosyl-diacylglycerol biosynthesis. Catalyzes the interconversion between glucose-6-phosphate and alpha-glucose-1-phosphate. This is the first step in the biosynthesis of diglucosyl-diacylglycerol (Glc2-DAG), i.e. a glycolipid found in the membrane, which is also used as a membrane anchor for lipoteichoic acid (LTA). The polypeptide is Phosphoglucomutase (pgcA) (Staphylococcus epidermidis (strain ATCC 12228 / FDA PCI 1200)).